The primary structure comprises 94 residues: ATP synthase F(0) complex subunit f, mitochondrial (94 aa).

Residue alanine 2 is modified to N-acetylalanine. Phosphoserine is present on serine 3. Residue lysine 22 is modified to N6-acetyllysine. A helical transmembrane segment spans residues 68-85 (MVLACYVLFSYSFSYKHL).

The protein belongs to the ATPase F chain family. In terms of assembly, component of the ATP synthase complex composed at least of ATP5F1A/subunit alpha, ATP5F1B/subunit beta, ATP5MC1/subunit c (homooctomer), MT-ATP6/subunit a, MT-ATP8/subunit 8, ATP5ME/subunit e, ATP5MF/subunit f, ATP5MG/subunit g, ATP5MK/subunit k, ATP5MJ/subunit j, ATP5F1C/subunit gamma, ATP5F1D/subunit delta, ATP5F1E/subunit epsilon, ATP5PF/subunit F6, ATP5PB/subunit b, ATP5PD/subunit d, ATP5PO/subunit OSCP. ATP synthase complex consists of a soluble F(1) head domain (subunits alpha(3) and beta(3)) - the catalytic core - and a membrane F(0) domain - the membrane proton channel (subunits c, a, 8, e, f, g, k and j). These two domains are linked by a central stalk (subunits gamma, delta, and epsilon) rotating inside the F1 region and a stationary peripheral stalk (subunits F6, b, d, and OSCP).

It is found in the mitochondrion. The protein localises to the mitochondrion inner membrane. Subunit f, of the mitochondrial membrane ATP synthase complex (F(1)F(0) ATP synthase or Complex V) that produces ATP from ADP in the presence of a proton gradient across the membrane which is generated by electron transport complexes of the respiratory chain. ATP synthase complex consist of a soluble F(1) head domain - the catalytic core - and a membrane F(1) domain - the membrane proton channel. These two domains are linked by a central stalk rotating inside the F(1) region and a stationary peripheral stalk. During catalysis, ATP synthesis in the catalytic domain of F(1) is coupled via a rotary mechanism of the central stalk subunits to proton translocation. In vivo, can only synthesize ATP although its ATP hydrolase activity can be activated artificially in vitro. Part of the complex F(0) domain. The sequence is that of ATP synthase F(0) complex subunit f, mitochondrial from Homo sapiens (Human).